Consider the following 90-residue polypeptide: Auxin-responsive protein SAUR23 (90 aa).

Belongs to the ARG7 family.

The protein resides in the cell membrane. Functions as a positive effector of cell expansion through modulation of auxin transport. The chain is Auxin-responsive protein SAUR23 from Arabidopsis thaliana (Mouse-ear cress).